An 861-amino-acid polypeptide reads, in one-letter code: Leucine--tRNA ligase (861 aa).

The 'HIGH' region signature appears at 42 to 52 (PYPSGRLHMGH). The 'KMSKS' region signature appears at 619–623 (KMSKS). K622 provides a ligand contact to ATP.

It belongs to the class-I aminoacyl-tRNA synthetase family.

It localises to the cytoplasm. It catalyses the reaction tRNA(Leu) + L-leucine + ATP = L-leucyl-tRNA(Leu) + AMP + diphosphate. The chain is Leucine--tRNA ligase from Haemophilus influenzae (strain 86-028NP).